A 205-amino-acid chain; its full sequence is MPASASPSIAGLLLAGGRATRMDGVDKGLQLLDGTPLALHVLSRLSPQVDETLISANRHADRYAELGAPFDARIVADETPDFPGPLAGLLAGMRAARAPLVACSPCDTPYLPADLVARLQAALDAQQADIAMAVTVDAQHVRSPQPTFALLRTSLADDLAARLAAGDRKVRAWYARHKTVEVEFHDERAFYNANSWQELAALARR.

Residues 14-16, K27, D77, and D107 each bind GTP; that span reads LAG. Residue D107 participates in Mg(2+) binding.

It belongs to the MobA family. In terms of assembly, monomer. The cofactor is Mg(2+).

Its subcellular location is the cytoplasm. It catalyses the reaction Mo-molybdopterin + GTP + H(+) = Mo-molybdopterin guanine dinucleotide + diphosphate. Its function is as follows. Transfers a GMP moiety from GTP to Mo-molybdopterin (Mo-MPT) cofactor (Moco or molybdenum cofactor) to form Mo-molybdopterin guanine dinucleotide (Mo-MGD) cofactor. The protein is Molybdenum cofactor guanylyltransferase of Burkholderia lata (strain ATCC 17760 / DSM 23089 / LMG 22485 / NCIMB 9086 / R18194 / 383).